The chain runs to 402 residues: Acyl-[acyl-carrier-protein] desaturase 3, chloroplastic (402 aa).

The N-terminal 32 residues, Met1 to Met32, are a transit peptide targeting the chloroplast. The segment at Met1–Leu66 is disordered. Fe cation is bound by residues Glu139, Glu178, His181, Glu231, Glu264, and His267.

It belongs to the fatty acid desaturase type 2 family. As to quaternary structure, homodimer. Fe(2+) is required as a cofactor.

The protein resides in the plastid. It is found in the chloroplast. It participates in lipid metabolism; fatty acid metabolism. In terms of biological role, introduces a cis double bond in the acyl chain of an acyl-[acyl-carrier protein]. The polypeptide is Acyl-[acyl-carrier-protein] desaturase 3, chloroplastic (Oryza sativa subsp. japonica (Rice)).